We begin with the raw amino-acid sequence, 373 residues long: Flagellar P-ring protein (373 aa).

A signal peptide spans 1–27; sequence MPSFSPTLLKLAAAALSALLLSGVAAS.

This sequence belongs to the FlgI family. As to quaternary structure, the basal body constitutes a major portion of the flagellar organelle and consists of four rings (L,P,S, and M) mounted on a central rod.

The protein localises to the periplasm. It localises to the bacterial flagellum basal body. Functionally, assembles around the rod to form the L-ring and probably protects the motor/basal body from shearing forces during rotation. This is Flagellar P-ring protein from Rhodopseudomonas palustris (strain BisB5).